Reading from the N-terminus, the 263-residue chain is Putative hydro-lyase BPUM_0381 (263 aa).

The protein belongs to the D-glutamate cyclase family.

The protein is Putative hydro-lyase BPUM_0381 of Bacillus pumilus (strain SAFR-032).